The chain runs to 381 residues: Alanine racemase, catabolic (381 aa).

K55 (proton acceptor; specific for D-alanine) is an active-site residue. At K55 the chain carries N6-(pyridoxal phosphate)lysine. A substrate-binding site is contributed by R154. Y276 (proton acceptor; specific for L-alanine) is an active-site residue. M322 lines the substrate pocket.

It belongs to the alanine racemase family. Pyridoxal 5'-phosphate serves as cofactor.

The enzyme catalyses L-alanine = D-alanine. Its function is as follows. Isomerizes L-alanine to D-alanine which is then oxidized to pyruvate by DadA. In Mesorhizobium japonicum (strain LMG 29417 / CECT 9101 / MAFF 303099) (Mesorhizobium loti (strain MAFF 303099)), this protein is Alanine racemase, catabolic (dadB).